Here is a 390-residue protein sequence, read N- to C-terminus: Two-component response regulator ORR29 (390 aa).

Positions 13 to 130 constitute a Response regulatory domain; the sequence is SAMVIDEDKC…TIKNLWQYVD (118 aa). Position 65 is a 4-aspartylphosphate (Asp65). The segment at residues 169 to 226 is a DNA-binding region (myb-like GARP); the sequence is KKYYLMWTPHLQKKFLHALQILGKDASPKNIKKIMGVDNIDCRQIAAHLQKHRLRLTK. Disordered regions lie at residues 233-271 and 303-339; these read FTTDTSKDESNSRIGPAESHHVCRNASTLQPRSNTQPTE and SKHSSDPSGDEDEQVVVGGDQDGCANEANDIDSSGDH. The span at 257–271 shows a compositional bias: polar residues; sequence NASTLQPRSNTQPTE.

It belongs to the ARR family. Type-B subfamily. In terms of processing, two-component system major event consists of a His-to-Asp phosphorelay between a sensor histidine kinase (HK) and a response regulator (RR). In plants, the His-to-Asp phosphorelay involves an additional intermediate named Histidine-containing phosphotransfer protein (HPt). This multistep phosphorelay consists of a His-Asp-His-Asp sequential transfer of a phosphate group between first a His and an Asp of the HK protein, followed by the transfer to a conserved His of the HPt protein and finally the transfer to an Asp in the receiver domain of the RR protein.

Its subcellular location is the nucleus. Functionally, transcriptional activator that binds specific DNA sequence. Functions as a response regulator involved in His-to-Asp phosphorelay signal transduction system. Phosphorylation of the Asp residue in the receiver domain activates the ability of the protein to promote the transcription of target genes. May directly activate some type-A response regulators in response to cytokinins. The polypeptide is Two-component response regulator ORR29 (Oryza sativa subsp. indica (Rice)).